Here is a 358-residue protein sequence, read N- to C-terminus: Biotin synthase (358 aa).

One can recognise a Radical SAM core domain in the interval 47–306 (KNNSKIKLCA…ALYKIIMPYA (260 aa)). Positions 65, 69, and 72 each coordinate [4Fe-4S] cluster. Residues S142, C174, C233, and R309 each coordinate [2Fe-2S] cluster.

Belongs to the radical SAM superfamily. Biotin synthase family. Homodimer. Requires [4Fe-4S] cluster as cofactor. It depends on [2Fe-2S] cluster as a cofactor.

The catalysed reaction is (4R,5S)-dethiobiotin + (sulfur carrier)-SH + 2 reduced [2Fe-2S]-[ferredoxin] + 2 S-adenosyl-L-methionine = (sulfur carrier)-H + biotin + 2 5'-deoxyadenosine + 2 L-methionine + 2 oxidized [2Fe-2S]-[ferredoxin]. Its pathway is cofactor biosynthesis; biotin biosynthesis; biotin from 7,8-diaminononanoate: step 2/2. Its function is as follows. Catalyzes the conversion of dethiobiotin (DTB) to biotin by the insertion of a sulfur atom into dethiobiotin via a radical-based mechanism. This is Biotin synthase from Methanocaldococcus jannaschii (strain ATCC 43067 / DSM 2661 / JAL-1 / JCM 10045 / NBRC 100440) (Methanococcus jannaschii).